The following is a 243-amino-acid chain: Pyridoxine 5'-phosphate synthase (243 aa).

Asn9 provides a ligand contact to 3-amino-2-oxopropyl phosphate. 11-12 provides a ligand contact to 1-deoxy-D-xylulose 5-phosphate; sequence DH. Arg20 serves as a coordination point for 3-amino-2-oxopropyl phosphate. His45 acts as the Proton acceptor in catalysis. Arg47 and His52 together coordinate 1-deoxy-D-xylulose 5-phosphate. The Proton acceptor role is filled by Glu72. Thr102 serves as a coordination point for 1-deoxy-D-xylulose 5-phosphate. His193 serves as the catalytic Proton donor. 3-amino-2-oxopropyl phosphate is bound by residues Gly194 and 215 to 216; that span reads GH.

Belongs to the PNP synthase family. As to quaternary structure, homooctamer; tetramer of dimers.

The protein resides in the cytoplasm. The enzyme catalyses 3-amino-2-oxopropyl phosphate + 1-deoxy-D-xylulose 5-phosphate = pyridoxine 5'-phosphate + phosphate + 2 H2O + H(+). The protein operates within cofactor biosynthesis; pyridoxine 5'-phosphate biosynthesis; pyridoxine 5'-phosphate from D-erythrose 4-phosphate: step 5/5. Its function is as follows. Catalyzes the complicated ring closure reaction between the two acyclic compounds 1-deoxy-D-xylulose-5-phosphate (DXP) and 3-amino-2-oxopropyl phosphate (1-amino-acetone-3-phosphate or AAP) to form pyridoxine 5'-phosphate (PNP) and inorganic phosphate. This chain is Pyridoxine 5'-phosphate synthase, found in Salmonella typhimurium (strain LT2 / SGSC1412 / ATCC 700720).